A 398-amino-acid polypeptide reads, in one-letter code: MMLKGITRLISRIHKLDPGRFLHMGTQARQSIAAHLDNQVPVESPRAISRTNENDPAKHGDQHEGQHYNISPQDLETVFPHGLPPRFVMQVKTFSEACLMVRKPALELLHYLKNTSFAYPAIRYLLYGEKGTGKTLSLCHVIHFCAKQDWLILHIPDAHLWVKNCRDLLQSSYNKQRFDQPLEASTWLKNFKTTNERFLNQIKVQEKYVWNKRESTEKGSPLGEVVEQGITRVRNATDAVGIVLKELKRQSSLGMFHLLVAVDGINALWGRTTLKREDKSPIAPEELALVHNLRKMMKNDWHGGAIVSALSQTGSLFKPRKAYLPQELLGKEGFDALDPFIPILVSNYNPKEFESCIQYYLENNWLQHEKAPTEEGKKELLFLSNANPSLLERHCAYL.

The N-terminal 21 residues, 1-21 (MMLKGITRLISRIHKLDPGRF), are a transit peptide targeting the mitochondrion. Residues 39 to 67 (QVPVESPRAISRTNENDPAKHGDQHEGQH) are disordered. The segment covering 52-66 (NENDPAKHGDQHEGQ) has biased composition (basic and acidic residues). GTP is bound by residues Met-100 and 128–135 (GEKGTGKT). N6-acetyllysine occurs at positions 175 and 207.

The protein belongs to the mitochondrion-specific ribosomal protein mS29 family. Component of the mitochondrial small ribosomal subunit (mt-SSU). Mature mammalian 55S mitochondrial ribosomes consist of a small (28S) and a large (39S) subunit. The 28S small subunit contains a 12S ribosomal RNA (12S mt-rRNA) and 30 different proteins. The 39S large subunit contains a 16S rRNA (16S mt-rRNA), a copy of mitochondrial valine transfer RNA (mt-tRNA(Val)), which plays an integral structural role, and 52 different proteins. Interacts with DELE1. Interacts with NOA1. In terms of tissue distribution, ubiquitous.

Its subcellular location is the mitochondrion. The catalysed reaction is GTP + H2O = GDP + phosphate + H(+). In terms of biological role, as a component of the mitochondrial small ribosomal subunit, it plays a role in the translation of mitochondrial mRNAs. Involved in mediating interferon-gamma-induced cell death. Displays GTPase activity in vitro. In Homo sapiens (Human), this protein is Small ribosomal subunit protein mS29.